We begin with the raw amino-acid sequence, 626 residues long: (+)-3-carene synthase 1, chloroplastic (626 aa).

A chloroplast-targeting transit peptide spans 1-45; that stretch reads MSLISAVPLASSCVSKSLISSVREHTALRRAIATLQMSRRGKSVA. Residues Asp377, Asp381, and Asp529 each contribute to the Mg(2+) site. The DDXXD motif signature appears at 377-381; sequence DDMYD.

This sequence belongs to the terpene synthase family. Tpsd subfamily. Requires Mg(2+) as cofactor. It depends on Mn(2+) as a cofactor.

The protein resides in the plastid. Its subcellular location is the chloroplast. It carries out the reaction (2E)-geranyl diphosphate = (+)-car-3-ene + diphosphate. It catalyses the reaction (2E)-geranyl diphosphate = terpinolene + diphosphate. It participates in terpene metabolism; oleoresin biosynthesis. It functions in the pathway secondary metabolite biosynthesis; terpenoid biosynthesis. Monoterpene synthase (TPS) involved in the biosynthesis of monoterpene natural products included in conifer oleoresin secretions and volatile emissions; these compounds contribute to biotic and abiotic stress defense against herbivores and pathogens. Catalyzes the conversion of (2E)-geranyl diphosphate (GPP) to (+)-car-3-ene and, to a lower extent, to terpinolene. This is (+)-3-carene synthase 1, chloroplastic from Pinus contorta (Shore pine).